The chain runs to 213 residues: ER lumen protein-retaining receptor erd-2.1 (213 aa).

Topologically, residues 1 to 2 (MN) are lumenal. The helical transmembrane segment at 3 to 21 (LFRFTADVAHAIAIVVLLL) threads the bilayer. The Cytoplasmic portion of the chain corresponds to 22-35 (KIWKSRSCEGISGR). A helical membrane pass occupies residues 36–53 (SQLLFALVFVTRYLDLFT). Over 54 to 61 (NFFSFYNT) the chain is Lumenal. The helical transmembrane segment at 62–80 (AMKIFYLVASFGTVYLMWA) threads the bilayer. The Cytoplasmic segment spans residues 81–96 (KFKATYDRNNDSFRIE). Residues 97-110 (FLVIPSMILALLIN) form a helical membrane-spanning segment. Topologically, residues 111 to 117 (HEFIFME) are lumenal. Residues 118–137 (VMWTFSIYLEAVAIMPQLFM) traverse the membrane as a helical segment. Residues 138–149 (LSRTGNAETITA) lie on the Cytoplasmic side of the membrane. A helical transmembrane segment spans residues 150–168 (HYLFALGSYRFLYILNWVY). Residues 169 to 178 (RYYTESFFDP) are Lumenal-facing. Residues 179–199 (ISVVAGIVQTVLYADFFYLYI) traverse the membrane as a helical segment. At 200 to 213 (TRVIQSNRQFEMSA) the chain is on the cytoplasmic side.

It belongs to the ERD2 family.

The protein localises to the endoplasmic reticulum membrane. Functionally, required for the retention of luminal endoplasmic reticulum proteins. Determines the specificity of the luminal ER protein retention system. Also required for normal vesicular traffic through the Golgi. This is ER lumen protein-retaining receptor erd-2.1 from Caenorhabditis elegans.